We begin with the raw amino-acid sequence, 420 residues long: L-rhamnose isomerase (420 aa).

His262, Asp294, and Asp296 together coordinate Mn(2+).

This sequence belongs to the rhamnose isomerase family. In terms of assembly, homotetramer. Mn(2+) is required as a cofactor.

Its subcellular location is the cytoplasm. It catalyses the reaction L-rhamnopyranose = L-rhamnulose. It participates in carbohydrate degradation; L-rhamnose degradation; glycerone phosphate from L-rhamnose: step 1/3. Its function is as follows. Catalyzes the interconversion of L-rhamnose and L-rhamnulose. This chain is L-rhamnose isomerase, found in Pectobacterium atrosepticum (strain SCRI 1043 / ATCC BAA-672) (Erwinia carotovora subsp. atroseptica).